A 515-amino-acid polypeptide reads, in one-letter code: Bifunctional purine biosynthesis protein PurH (515 aa).

The 145-residue stretch at 1–145 folds into the MGS-like domain; sequence MTKRALISVS…KNHASVTVVV (145 aa).

This sequence belongs to the PurH family.

It catalyses the reaction (6R)-10-formyltetrahydrofolate + 5-amino-1-(5-phospho-beta-D-ribosyl)imidazole-4-carboxamide = 5-formamido-1-(5-phospho-D-ribosyl)imidazole-4-carboxamide + (6S)-5,6,7,8-tetrahydrofolate. It carries out the reaction IMP + H2O = 5-formamido-1-(5-phospho-D-ribosyl)imidazole-4-carboxamide. It functions in the pathway purine metabolism; IMP biosynthesis via de novo pathway; 5-formamido-1-(5-phospho-D-ribosyl)imidazole-4-carboxamide from 5-amino-1-(5-phospho-D-ribosyl)imidazole-4-carboxamide (10-formyl THF route): step 1/1. Its pathway is purine metabolism; IMP biosynthesis via de novo pathway; IMP from 5-formamido-1-(5-phospho-D-ribosyl)imidazole-4-carboxamide: step 1/1. The protein is Bifunctional purine biosynthesis protein PurH of Streptococcus pyogenes serotype M12 (strain MGAS2096).